The following is a 497-amino-acid chain: Glycerol kinase (497 aa).

Residue threonine 13 participates in ADP binding. ATP contacts are provided by threonine 13, threonine 14, and serine 15. Threonine 13 contributes to the sn-glycerol 3-phosphate binding site. Residue arginine 17 coordinates ADP. 3 residues coordinate sn-glycerol 3-phosphate: arginine 83, glutamate 84, and tyrosine 135. The glycerol site is built by arginine 83, glutamate 84, and tyrosine 135. Residue histidine 231 is modified to Phosphohistidine; by HPr. Aspartate 245 contributes to the sn-glycerol 3-phosphate binding site. Aspartate 245 and glutamine 246 together coordinate glycerol. Threonine 267 and glycine 310 together coordinate ADP. ATP-binding residues include threonine 267, glycine 310, glutamine 314, and glycine 411. Positions 411 and 415 each coordinate ADP.

Belongs to the FGGY kinase family. In terms of assembly, homotetramer and homodimer (in equilibrium). Post-translationally, the phosphoenolpyruvate-dependent sugar phosphotransferase system (PTS), including enzyme I, and histidine-containing protein (HPr) are required for the phosphorylation, which leads to the activation of the enzyme.

The enzyme catalyses glycerol + ATP = sn-glycerol 3-phosphate + ADP + H(+). Its pathway is polyol metabolism; glycerol degradation via glycerol kinase pathway; sn-glycerol 3-phosphate from glycerol: step 1/1. Its activity is regulated as follows. Activated by phosphorylation and inhibited by fructose 1,6-bisphosphate (FBP). Key enzyme in the regulation of glycerol uptake and metabolism. Catalyzes the phosphorylation of glycerol to yield sn-glycerol 3-phosphate. In Listeria monocytogenes serovar 1/2a (strain ATCC BAA-679 / EGD-e), this protein is Glycerol kinase.